Consider the following 383-residue polypeptide: Lipid-A-disaccharide synthase (383 aa).

This sequence belongs to the LpxB family.

It catalyses the reaction a lipid X + a UDP-2-N,3-O-bis[(3R)-3-hydroxyacyl]-alpha-D-glucosamine = a lipid A disaccharide + UDP + H(+). The protein operates within bacterial outer membrane biogenesis; LPS lipid A biosynthesis. Condensation of UDP-2,3-diacylglucosamine and 2,3-diacylglucosamine-1-phosphate to form lipid A disaccharide, a precursor of lipid A, a phosphorylated glycolipid that anchors the lipopolysaccharide to the outer membrane of the cell. This chain is Lipid-A-disaccharide synthase, found in Anaeromyxobacter sp. (strain K).